We begin with the raw amino-acid sequence, 101 residues long: NADH-quinone oxidoreductase subunit K (101 aa).

3 helical membrane-spanning segments follow: residues 4-24 (LAHY…GIFL), 30-50 (IVLL…FVAF), and 61-81 (VFVF…LAIL).

The protein belongs to the complex I subunit 4L family. NDH-1 is composed of 14 different subunits. Subunits NuoA, H, J, K, L, M, N constitute the membrane sector of the complex.

The protein localises to the cell inner membrane. It carries out the reaction a quinone + NADH + 5 H(+)(in) = a quinol + NAD(+) + 4 H(+)(out). In terms of biological role, NDH-1 shuttles electrons from NADH, via FMN and iron-sulfur (Fe-S) centers, to quinones in the respiratory chain. The immediate electron acceptor for the enzyme in this species is believed to be ubiquinone. Couples the redox reaction to proton translocation (for every two electrons transferred, four hydrogen ions are translocated across the cytoplasmic membrane), and thus conserves the redox energy in a proton gradient. The protein is NADH-quinone oxidoreductase subunit K of Ralstonia nicotianae (strain ATCC BAA-1114 / GMI1000) (Ralstonia solanacearum).